The chain runs to 393 residues: Proteasome-activating nucleotidase (393 aa).

The stretch at 14–53 (SDEVQLVRLLEEKIKSLQIEIENLRKELNYYKAEMEKMLS) forms a coiled coil. ATP contacts are provided by residues 178 to 183 (GTGKTM) and Tyr317. The tract at residues 391 to 393 (KYS) is docks into pockets in the proteasome alpha-ring to cause gate opening.

This sequence belongs to the AAA ATPase family. As to quaternary structure, homohexamer. The hexameric complex has a two-ring architecture resembling a top hat that caps the 20S proteasome core at one or both ends. Upon ATP-binding, the C-terminus of PAN interacts with the alpha-rings of the proteasome core by binding to the intersubunit pockets.

It localises to the cytoplasm. In terms of biological role, ATPase which is responsible for recognizing, binding, unfolding and translocation of substrate proteins into the archaeal 20S proteasome core particle. Is essential for opening the gate of the 20S proteasome via an interaction with its C-terminus, thereby allowing substrate entry and access to the site of proteolysis. Thus, the C-termini of the proteasomal ATPase function like a 'key in a lock' to induce gate opening and therefore regulate proteolysis. Unfolding activity requires energy from ATP hydrolysis, whereas ATP binding alone promotes ATPase-20S proteasome association which triggers gate opening, and supports translocation of unfolded substrates. The protein is Proteasome-activating nucleotidase of Saccharolobus islandicus (strain Y.N.15.51 / Yellowstone #2) (Sulfolobus islandicus).